A 157-amino-acid chain; its full sequence is Small ribosomal subunit protein uS7 (157 aa).

This sequence belongs to the universal ribosomal protein uS7 family. Part of the 30S ribosomal subunit. Contacts proteins S9 and S11.

Functionally, one of the primary rRNA binding proteins, it binds directly to 16S rRNA where it nucleates assembly of the head domain of the 30S subunit. Is located at the subunit interface close to the decoding center, probably blocks exit of the E-site tRNA. The chain is Small ribosomal subunit protein uS7 from Francisella tularensis subsp. tularensis (strain FSC 198).